Here is a 2291-residue protein sequence, read N- to C-terminus: Protein Ycf2 (2291 aa).

ATP is bound at residue 1645–1652 (GSIGTGRS).

It belongs to the Ycf2 family.

It localises to the plastid. It is found in the chloroplast stroma. Probable ATPase of unknown function. Its presence in a non-photosynthetic plant (Epifagus virginiana) and experiments in tobacco indicate that it has an essential function which is probably not related to photosynthesis. The sequence is that of Protein Ycf2 from Olimarabidopsis pumila (Dwarf rocket).